Reading from the N-terminus, the 92-residue chain is Small ribosomal subunit protein uS19 (92 aa).

This sequence belongs to the universal ribosomal protein uS19 family.

Functionally, protein S19 forms a complex with S13 that binds strongly to the 16S ribosomal RNA. The polypeptide is Small ribosomal subunit protein uS19 (Staphylococcus epidermidis (strain ATCC 35984 / DSM 28319 / BCRC 17069 / CCUG 31568 / BM 3577 / RP62A)).